We begin with the raw amino-acid sequence, 109 residues long: Putative membrane protein insertion efficiency factor (109 aa).

It belongs to the UPF0161 family.

The protein localises to the cell inner membrane. Its function is as follows. Could be involved in insertion of integral membrane proteins into the membrane. The sequence is that of Putative membrane protein insertion efficiency factor from Rhodopseudomonas palustris (strain BisB18).